The chain runs to 1506 residues: ABC transporter C family member 9 (1506 aa).

11 helical membrane-spanning segments follow: residues 37–57, 84–104, 116–136, 150–170, 179–199, 315–335, 350–370, 427–447, 452–472, 541–561, and 567–587; these read MQVTFLAFFLIHLALKWFGVV, ISLLCSVSILGTHCFILLLLF, VSVFSAEVSQSFSWLFVSVVV, MLRSWWLCSFILSFSFDAHFI, FQDYADLTGLLASLFLLAVSI, AINAVFAVVNASTAYIGPYLI, LNHGYLLALGFLTAKIVETVT, FIWYVNNIWMLPIQIFSAIYI, LGLGALAALVTTLMVMACNYP, FILWGAPSLISVVTFVTCMLM, and AGAVLSALATFQMLQSPIFGL. The ABC transmembrane type-1 1 domain occupies 314 to 596; that stretch reads AAINAVFAVV…LPDLLSALVQ (283 aa). Positions 630–853 constitute an ABC transporter 1 domain; the sequence is VEIENGAFSW…NIGFEVLVGA (224 aa). An ATP-binding site is contributed by 665-672; it reads GAVGSGKS. The next 5 helical transmembrane spans lie at 934–956, 976–996, 1048–1068, 1167–1187, and 1191–1211; these read LLVPFIILAQSCFQMLQIASNYW, ILLVYALLAAGSSLCVLARTI, MAVKLGWCAFSIIQIVGTIFV, LSHFVFAFSLVLLVTLPEGVI, and IAGLGVTYGLSLNVLQATVIW. The 283-residue stretch at 936-1218 folds into the ABC transmembrane type-1 2 domain; sequence VPFIILAQSC…VIWNICNAEN (283 aa). The 233-residue stretch at 1257–1489 folds into the ABC transporter 2 domain; that stretch reads FRDLQVRYAE…EDSFFSKLIK (233 aa). Residue 1289–1296 coordinates ATP; sequence GRTGSGKS.

The protein belongs to the ABC transporter superfamily. ABCC family. Conjugate transporter (TC 3.A.1.208) subfamily. As to expression, ubiquitous.

The protein resides in the membrane. The enzyme catalyses ATP + H2O + xenobioticSide 1 = ADP + phosphate + xenobioticSide 2.. Pump for glutathione S-conjugates. The protein is ABC transporter C family member 9 (ABCC9) of Arabidopsis thaliana (Mouse-ear cress).